A 258-amino-acid polypeptide reads, in one-letter code: Acyl-[acyl-carrier-protein]--UDP-N-acetylglucosamine O-acyltransferase (258 aa).

This sequence belongs to the transferase hexapeptide repeat family. LpxA subfamily. Homotrimer.

Its subcellular location is the cytoplasm. It carries out the reaction a (3R)-hydroxyacyl-[ACP] + UDP-N-acetyl-alpha-D-glucosamine = a UDP-3-O-[(3R)-3-hydroxyacyl]-N-acetyl-alpha-D-glucosamine + holo-[ACP]. It participates in glycolipid biosynthesis; lipid IV(A) biosynthesis; lipid IV(A) from (3R)-3-hydroxytetradecanoyl-[acyl-carrier-protein] and UDP-N-acetyl-alpha-D-glucosamine: step 1/6. Its function is as follows. Involved in the biosynthesis of lipid A, a phosphorylated glycolipid that anchors the lipopolysaccharide to the outer membrane of the cell. This chain is Acyl-[acyl-carrier-protein]--UDP-N-acetylglucosamine O-acyltransferase, found in Pseudomonas savastanoi pv. phaseolicola (strain 1448A / Race 6) (Pseudomonas syringae pv. phaseolicola (strain 1448A / Race 6)).